The primary structure comprises 253 residues: Phosphate import ATP-binding protein PstB (253 aa).

The ABC transporter domain occupies 5–248 (IQVRDLNAYY…PSDKRTEDYI (244 aa)). 37–44 (GPSGCGKS) provides a ligand contact to ATP.

It belongs to the ABC transporter superfamily. Phosphate importer (TC 3.A.1.7) family. As to quaternary structure, the complex is composed of two ATP-binding proteins (PstB), two transmembrane proteins (PstC and PstA) and a solute-binding protein (PstS).

It is found in the cell inner membrane. The enzyme catalyses phosphate(out) + ATP + H2O = ADP + 2 phosphate(in) + H(+). Part of the ABC transporter complex PstSACB involved in phosphate import. Responsible for energy coupling to the transport system. The sequence is that of Phosphate import ATP-binding protein PstB from Koribacter versatilis (strain Ellin345).